A 182-amino-acid polypeptide reads, in one-letter code: MEHEVVSALAAFTQRYVDCWQQEKGHLPASEALYGIPSPCIVENHEDTVYWSPQPFAPAAALDGVERALEISLHPDVHAFYTAQYAGDMAAQFDSLSCQLLQVWSEDDFTRMQENLIGHLLTQKRLKLTPTLFLATTDSEMTMVSLCNISGEIILEEFGTKKRQILAPTLAAFLFGLNPLAV.

This sequence belongs to the Syd family.

Its subcellular location is the cell inner membrane. Its function is as follows. Interacts with the SecY protein in vivo. May bind preferentially to an uncomplexed state of SecY, thus functioning either as a chelating agent for excess SecY in the cell or as a regulatory factor that negatively controls the translocase function. This chain is Protein Syd, found in Pectobacterium carotovorum subsp. carotovorum (strain PC1).